The chain runs to 263 residues: Copper homeostasis protein cutC homolog (263 aa).

The protein belongs to the CutC family.

In terms of biological role, involved in copper homeostasis. The sequence is that of Copper homeostasis protein cutC homolog from Drosophila melanogaster (Fruit fly).